The following is a 189-amino-acid chain: Leucine repeat adapter protein 25 (189 aa).

The residue at position 28 (Ser-28) is a Phosphoserine. The disordered stretch occupies residues 55–81 (LSRAARAPDGPRHAAGSANLGSAAGPR). The segment covering 68–79 (AAGSANLGSAAG) has biased composition (low complexity). The stretch at 86-114 (LDSALAALRKEMVGLRQLDMSLLCQLWGL) is one LRR repeat. A disordered region spans residues 141–174 (DSSYPPDAGLSDDDEPPDASLPPDPPPLTVPQTH). Residues 159–169 (ASLPPDPPPLT) are compositionally biased toward pro residues. The residue at position 188 (Ser-188) is a Phosphoserine.

This sequence belongs to the FAM89 family. In terms of assembly, interacts with SKI. Interacts (via LRR repeat) with CDC42BPA (via AGC-kinase C-terminal domain) and CDC42BPB (via AGC-kinase C-terminal domain). Interacts (via LRR repeat) with LIMK1 (via LIM zinc-binding domains). Forms a tripartite complex with CDC42BPA, CDC42BPB and LIMK1.

It localises to the cytoplasm. The protein localises to the cell projection. Its subcellular location is the lamellipodium. Functionally, negatively regulates TGF-beta-induced signaling; in cooperation with SKI prevents the translocation of SMAD2 from the nucleus to the cytoplasm in response to TGF-beta. Acts as an adapter that mediates the specific recognition of LIMK1 by CDC42BPA and CDC42BPB in the lamellipodia. LRAP25-mediated CDC42BPA/CDC42BPB targeting to LIMK1 and the lamellipodium results in LIMK1 activation and the subsequent phosphorylation of CFL1 which is important for lamellipodial F-actin regulation. This is Leucine repeat adapter protein 25 from Rattus norvegicus (Rat).